Here is a 98-residue protein sequence, read N- to C-terminus: DNA-binding protein Fis (98 aa).

A DNA-binding region (H-T-H motif) is located at residues 74–93; the sequence is QTRAALMMGINRGTLRKKLK.

This sequence belongs to the transcriptional regulatory Fis family. In terms of assembly, homodimer.

In terms of biological role, activates ribosomal RNA transcription. Plays a direct role in upstream activation of rRNA promoters. In Enterobacter sp. (strain 638), this protein is DNA-binding protein Fis.